Reading from the N-terminus, the 111-residue chain is Probable 4-amino-4-deoxy-L-arabinose-phosphoundecaprenol flippase subunit ArnE (111 aa).

The next 3 membrane-spanning stretches (helical) occupy residues 38-58 (LWLG…LLVL), 61-81 (LPVG…TLAA), and 91-111 (PRHW…GSAA). The EamA domain maps to 40–109 (LGLALICMGA…IISGIIILGS (70 aa)).

This sequence belongs to the ArnE family. In terms of assembly, heterodimer of ArnE and ArnF.

It localises to the cell inner membrane. It functions in the pathway bacterial outer membrane biogenesis; lipopolysaccharide biosynthesis. Its function is as follows. Translocates 4-amino-4-deoxy-L-arabinose-phosphoundecaprenol (alpha-L-Ara4N-phosphoundecaprenol) from the cytoplasmic to the periplasmic side of the inner membrane. This is Probable 4-amino-4-deoxy-L-arabinose-phosphoundecaprenol flippase subunit ArnE from Salmonella heidelberg (strain SL476).